A 510-amino-acid chain; its full sequence is Ribose import ATP-binding protein RbsA 1 (510 aa).

2 consecutive ABC transporter domains span residues 20–256 (LEMR…VGRD) and 266–510 (VTLG…TGNA). 52 to 59 (GENGAGKS) lines the ATP pocket.

The protein belongs to the ABC transporter superfamily. Ribose importer (TC 3.A.1.2.1) family. The complex is composed of an ATP-binding protein (RbsA), two transmembrane proteins (RbsC) and a solute-binding protein (RbsB).

It is found in the cell inner membrane. The enzyme catalyses D-ribose(out) + ATP + H2O = D-ribose(in) + ADP + phosphate + H(+). Its function is as follows. Part of the ABC transporter complex RbsABC involved in ribose import. Responsible for energy coupling to the transport system. This chain is Ribose import ATP-binding protein RbsA 1, found in Agrobacterium fabrum (strain C58 / ATCC 33970) (Agrobacterium tumefaciens (strain C58)).